Reading from the N-terminus, the 396-residue chain is Probable sugar efflux transporter (396 aa).

12 helical membrane passes run 15 to 35 (VLIMACAGFIFNTTEFVPVAM), 51 to 71 (GLMMTVYAWTVLIMSLPAMLA), 84 to 104 (LFIIFIVGHILSVIAWNFWIL), 109 to 129 (MCIALAHSVFWSITASLVMRI), 137 to 157 (QALGMLAIGTALATILGLPIG), 168 to 188 (VTFGIIAVLALSIMFLIIRLL), 209 to 229 (PLLLWLYVTTAIVISAHFTAY), 245 to 265 (NFATAVLLVFGFSGIAASLLF), 276 to 296 (FIVVSMSLLMFSLLLLLFSTE), 297 to 317 (TIIAMFSLVFIWGIGISCIGL), 333 to 353 (VATAIYSGIFNAGIGAGALFG), and 365 to 385 (IGYTGAALGLIGFIIFITTHL).

This sequence belongs to the major facilitator superfamily. SotB (TC 2.A.1.2) family.

Its subcellular location is the cell inner membrane. In terms of biological role, involved in the efflux of sugars. The physiological role may be the reduction of the intracellular concentration of toxic sugars or sugar metabolites. This chain is Probable sugar efflux transporter, found in Haemophilus influenzae (strain PittGG).